The sequence spans 278 residues: 4-deoxy-L-threo-5-hexosulose-uronate ketol-isomerase (278 aa).

The Zn(2+) site is built by H196, H198, E203, and H245.

It belongs to the KduI family. Requires Zn(2+) as cofactor.

It carries out the reaction 5-dehydro-4-deoxy-D-glucuronate = 3-deoxy-D-glycero-2,5-hexodiulosonate. It participates in glycan metabolism; pectin degradation; 2-dehydro-3-deoxy-D-gluconate from pectin: step 4/5. Catalyzes the isomerization of 5-dehydro-4-deoxy-D-glucuronate to 3-deoxy-D-glycero-2,5-hexodiulosonate. The sequence is that of 4-deoxy-L-threo-5-hexosulose-uronate ketol-isomerase from Shigella sonnei (strain Ss046).